Consider the following 151-residue polypeptide: Caveolin-3 (151 aa).

The Cytoplasmic segment spans residues 1 to 83 (MMAEERTDLE…RLLSTLLGVP (83 aa)). Residue Lys38 forms a Glycyl lysine isopeptide (Lys-Gly) (interchain with G-Cter in SUMO3) linkage. Residues 64-114 (TFTVSKYWCYRLLSTLLGVPLALLWGFLFACISFCHIWAVVPCIKSYLIEI) form a required for interaction with DAG1 region. The segment at residues 84 to 104 (LALLWGFLFACISFCHIWAVV) is an intramembrane region (helical). At 105–151 (PCIKSYLIEIQCISHIYSLCIRTFCNPVFAALGQVCSNIKVMLRKEV) the chain is on the cytoplasmic side.

Belongs to the caveolin family. As to quaternary structure, homooligomer. Interacts with DYSF. Interacts with DLG1 and KCNA5; forms a ternary complex. Interacts with DAG1 (via its C-terminal); the interaction prevents binding of DAG1 with DMD. Interacts with TRIM72. Interacts with MUSK; may regulate MUSK signaling. Interacts with POPDC1. Interacts with CAVIN1, CAVIN2 and CAVIN4. Post-translationally, sumoylation with SUMO3 by PIAS4 may reduce agonist-induced internalization and desensitization of adrenergic receptor ABRD2. In terms of tissue distribution, expressed specifically in skeletal muscle and heart.

It is found in the golgi apparatus membrane. It localises to the cell membrane. Its subcellular location is the membrane. The protein resides in the caveola. The protein localises to the sarcolemma. May act as a scaffolding protein within caveolar membranes. Interacts directly with G-protein alpha subunits and can functionally regulate their activity. May also regulate voltage-gated potassium channels. Plays a role in the sarcolemma repair mechanism of both skeletal muscle and cardiomyocytes that permits rapid resealing of membranes disrupted by mechanical stress. Mediates the recruitment of CAVIN2 and CAVIN3 proteins to the caveolae. The chain is Caveolin-3 (CAV3) from Sus scrofa (Pig).